Here is a 29-residue protein sequence, read N- to C-terminus: Conotoxin Bu17 (29 aa).

3 disulfides stabilise this stretch: Cys-4–Cys-19, Cys-5–Cys-25, and Cys-15–Cys-26. Cys-26 bears the Cysteine amide mark.

The protein belongs to the conotoxin M superfamily. As to expression, expressed by the venom duct.

It is found in the secreted. The chain is Conotoxin Bu17 from Conus bullatus (Bubble cone).